The sequence spans 346 residues: Protein RecA (346 aa).

66–73 (GPESSGKT) lines the ATP pocket.

The protein belongs to the RecA family.

The protein localises to the cytoplasm. Its function is as follows. Can catalyze the hydrolysis of ATP in the presence of single-stranded DNA, the ATP-dependent uptake of single-stranded DNA by duplex DNA, and the ATP-dependent hybridization of homologous single-stranded DNAs. It interacts with LexA causing its activation and leading to its autocatalytic cleavage. This is Protein RecA from Aromatoleum aromaticum (strain DSM 19018 / LMG 30748 / EbN1) (Azoarcus sp. (strain EbN1)).